Consider the following 71-residue polypeptide: Plasticin-C2 (71 aa).

A signal peptide spans 1-22 (MAFLKKSLLLVLFLALVPLSIC). Residues 23 to 45 (EEEKREEEDEEKQEDDDQSENKR) constitute a propeptide that is removed on maturation. Residues 25-46 (EKREEEDEEKQEDDDQSENKRG) are disordered. Acidic residues predominate over residues 26–40 (KREEEDEEKQEDDDQ). Asn-68 carries the post-translational modification Asparagine amide. A propeptide spanning residues 70–71 (ES) is cleaved from the precursor.

This sequence belongs to the frog skin active peptide (FSAP) family. Plasticin subfamily. Expressed by the skin glands.

The protein resides in the secreted. Its subcellular location is the target cell membrane. Its function is as follows. Neutral peptide with no antimicrobial activity. May act in synergy with cationic peptides by enhancing their activity. Has a moderate hemolytic activity. The chain is Plasticin-C2 from Agalychnis callidryas (Red-eyed tree frog).